The primary structure comprises 360 residues: Phospho-N-acetylmuramoyl-pentapeptide-transferase (360 aa).

10 helical membrane passes run 25 to 45 (RGIL…PWMI), 73 to 93 (TMGG…WADL), 97 to 117 (YVWV…VDDY), 132 to 152 (WKYF…YMTA), 168 to 188 (VSIP…VGSS), 199 to 219 (GLAI…CYLS), 236 to 256 (AGEL…FLWF), 263 to 283 (VFMG…IAVI), 288 to 308 (VVLF…IIQV), and 338 to 358 (VIVR…ATLK).

Belongs to the glycosyltransferase 4 family. MraY subfamily. It depends on Mg(2+) as a cofactor.

The protein localises to the cell inner membrane. It catalyses the reaction UDP-N-acetyl-alpha-D-muramoyl-L-alanyl-gamma-D-glutamyl-meso-2,6-diaminopimeloyl-D-alanyl-D-alanine + di-trans,octa-cis-undecaprenyl phosphate = di-trans,octa-cis-undecaprenyl diphospho-N-acetyl-alpha-D-muramoyl-L-alanyl-D-glutamyl-meso-2,6-diaminopimeloyl-D-alanyl-D-alanine + UMP. It participates in cell wall biogenesis; peptidoglycan biosynthesis. Catalyzes the initial step of the lipid cycle reactions in the biosynthesis of the cell wall peptidoglycan: transfers peptidoglycan precursor phospho-MurNAc-pentapeptide from UDP-MurNAc-pentapeptide onto the lipid carrier undecaprenyl phosphate, yielding undecaprenyl-pyrophosphoryl-MurNAc-pentapeptide, known as lipid I. This chain is Phospho-N-acetylmuramoyl-pentapeptide-transferase, found in Ectopseudomonas mendocina (strain ymp) (Pseudomonas mendocina).